The following is a 422-amino-acid chain: UDP-N-acetylglucosamine 1-carboxyvinyltransferase (422 aa).

22 to 23 contributes to the phosphoenolpyruvate binding site; sequence KN. Residue Arg-93 participates in UDP-N-acetyl-alpha-D-glucosamine binding. Cys-117 serves as the catalytic Proton donor. A 2-(S-cysteinyl)pyruvic acid O-phosphothioketal modification is found at Cys-117. Residues 122-126, Asp-305, and Ile-327 each bind UDP-N-acetyl-alpha-D-glucosamine; that span reads RPVDQ.

This sequence belongs to the EPSP synthase family. MurA subfamily.

Its subcellular location is the cytoplasm. The enzyme catalyses phosphoenolpyruvate + UDP-N-acetyl-alpha-D-glucosamine = UDP-N-acetyl-3-O-(1-carboxyvinyl)-alpha-D-glucosamine + phosphate. Its pathway is cell wall biogenesis; peptidoglycan biosynthesis. Its function is as follows. Cell wall formation. Adds enolpyruvyl to UDP-N-acetylglucosamine. The protein is UDP-N-acetylglucosamine 1-carboxyvinyltransferase of Bordetella petrii (strain ATCC BAA-461 / DSM 12804 / CCUG 43448).